The sequence spans 261 residues: [LysW]-aminoadipate/[LysW]-glutamate kinase (261 aa).

Substrate is bound by residues 35–36 (GG), Arg62, and Asn166.

This sequence belongs to the acetylglutamate kinase family. LysZ subfamily.

The protein resides in the cytoplasm. The enzyme catalyses [amino-group carrier protein]-C-terminal-N-(1,4-dicarboxybutan-1-yl)-L-glutamine + ATP = [amino-group carrier protein]-C-terminal-N-(1-carboxy-5-phosphooxy-5-oxopentan-1-yl)-L-glutamine + ADP. It carries out the reaction [amino-group carrier protein]-C-terminal-gamma-(L-glutamyl)-L-glutamate + ATP = [amino-group carrier protein]-C-terminal-gamma-(5-phospho-L-glutamyl)-L-glutamate + ADP. The protein operates within amino-acid biosynthesis; L-lysine biosynthesis via AAA pathway; L-lysine from L-alpha-aminoadipate (Thermus route): step 2/5. It participates in amino-acid biosynthesis; L-arginine biosynthesis. Involved in both the arginine and lysine biosynthetic pathways. Phosphorylates the LysW-bound precursors glutamate (for arginine biosynthesis), respectively alpha-aminoadipate (for lysine biosynthesis). The chain is [LysW]-aminoadipate/[LysW]-glutamate kinase from Sulfolobus acidocaldarius (strain ATCC 33909 / DSM 639 / JCM 8929 / NBRC 15157 / NCIMB 11770).